We begin with the raw amino-acid sequence, 1330 residues long: ABC multidrug transporter mdr4 (1330 aa).

N-linked (GlcNAc...) asparagine glycosylation is present at asparagine 3. The next 6 helical transmembrane spans lie at 90–110 (VLLIIGGLLFAICAGIPFPLL), 144–164 (VLYVIYITIANFCFIYAHSTC), 218–238 (KVGLVISTLSYFVAAYVVAFI), 243–263 (IAGMLVSVVPCFFLMALGGGH), 324–344 (HAAQLGCLYFIAYSANALAFW), and 370–390 (IFVLIDASFILSQVAPFIHVF). The 299-residue stretch at 94–392 (IGGLLFAICA…VAPFIHVFAS (299 aa)) folds into the ABC transmembrane type-1 1 domain. The ABC transporter 1 domain maps to 428–666 (IRFRDVHFKY…GGVYAEMVRL (239 aa)). 463-470 (GPSGGGKS) serves as a coordination point for ATP. N-linked (GlcNAc...) asparagine glycosylation is present at asparagine 707. The segment at 717 to 736 (VADTPSDSRDGSEEEARKKR) is disordered. Basic and acidic residues predominate over residues 722–733 (SDSRDGSEEEAR). 6 consecutive transmembrane segments (helical) span residues 761–781 (LLGLAMSVIIGGSYSAEAIVF), 806–826 (LLFFILALVEFGANVVGGCAF), 871–893 (ASALGGITGTTIGLLLATAVNLI), 903–923 (AWKITIVLFPTIPVLLVSGMM), 989–1009 (AWLALAFSISNLVYALAYWWG), and 1023–1043 (FFIVMPALLFSTQSCGQMFAL). The 289-residue stretch at 761-1049 (LLGLAMSVII…MFALAPDISK (289 aa)) folds into the ABC transmembrane type-1 2 domain. Residues 1086–1325 (AQLRDVHFTY…SETYRTSVIH (240 aa)) enclose the ABC transporter 2 domain. ATP is bound at residue 1121–1128 (GPSGSGKS).

Belongs to the ABC transporter superfamily. ABCB family. Multidrug resistance exporter (TC 3.A.1.201) subfamily.

It is found in the cell membrane. The enzyme catalyses itraconazole(in) + ATP + H2O = itraconazole(out) + ADP + phosphate + H(+). The catalysed reaction is voriconazole(in) + ATP + H2O = voriconazole(out) + ADP + phosphate + H(+). Functionally, pleiotropic ABC efflux transporter that confers resistance to azoles such as itraconazole and voriconazole. This is ABC multidrug transporter mdr4 from Aspergillus fumigatus (strain ATCC MYA-4609 / CBS 101355 / FGSC A1100 / Af293) (Neosartorya fumigata).